We begin with the raw amino-acid sequence, 388 residues long: MNTSQLREKFKEVFGVEADHTFFSPGRINLIGEHTDYNGGNVLPVAITLGTYGAARKRDDKVLRFFSANFEEKGIIEVPLENLRFENEHNWTNYPKGVLHFLQEAGHTIDSGMDIYIYGNIPNGSGLSSSSSLELLIGVIVEKLYDLKLERLDLVKIGKQTENDFIGVNSGIMDQFAIGMGADQCAIYLDTNTLKYDLVPLDLKDNVVVIMNTNKRRELSDSKYNERRAECETAVSELQEKLDIQTLGELDLWTFDAYSYLIKDENRIKRARHAVLENQRTLQARKALEAGELEGFGRLMNASHVSLKYDYEVTGLELDTLAHTAWEQEGVLGARMTGAGFGGCAIALVNKDKVEDFKKAVGQRYEEVVGYAPSFYIAEVTGGSRVLD.

A substrate-binding site is contributed by 33–36; that stretch reads EHTD. ATP contacts are provided by residues S67 and 124–130; that span reads GSGLSSS. Mg(2+) is bound by residues S130 and E162. D174 (proton acceptor) is an active-site residue. Y224 contributes to the substrate binding site.

It belongs to the GHMP kinase family. GalK subfamily.

It localises to the cytoplasm. The enzyme catalyses alpha-D-galactose + ATP = alpha-D-galactose 1-phosphate + ADP + H(+). It participates in carbohydrate metabolism; galactose metabolism. Its function is as follows. Catalyzes the transfer of the gamma-phosphate of ATP to D-galactose to form alpha-D-galactose-1-phosphate (Gal-1-P). This Streptococcus thermophilus (strain ATCC BAA-491 / LMD-9) protein is Galactokinase.